The sequence spans 416 residues: Ribulose bisphosphate carboxylase large chain (416 aa).

An N6,N6,N6-trimethyllysine modification is found at lysine 5. Residues asparagine 114 and threonine 164 each contribute to the substrate site. The active-site Proton acceptor is the lysine 166. Position 168 (lysine 168) interacts with substrate. Mg(2+) is bound by residues lysine 192, aspartate 194, and glutamate 195. Residue lysine 192 is modified to N6-carboxylysine. Histidine 285 (proton acceptor) is an active-site residue. 3 residues coordinate substrate: arginine 286, histidine 318, and serine 370.

It belongs to the RuBisCO large chain family. Type I subfamily. Heterohexadecamer of 8 large chains and 8 small chains; disulfide-linked. The disulfide link is formed within the large subunit homodimers. Mg(2+) is required as a cofactor. In terms of processing, the disulfide bond which can form in the large chain dimeric partners within the hexadecamer appears to be associated with oxidative stress and protein turnover.

It is found in the plastid. The protein resides in the chloroplast. It carries out the reaction 2 (2R)-3-phosphoglycerate + 2 H(+) = D-ribulose 1,5-bisphosphate + CO2 + H2O. It catalyses the reaction D-ribulose 1,5-bisphosphate + O2 = 2-phosphoglycolate + (2R)-3-phosphoglycerate + 2 H(+). In terms of biological role, ruBisCO catalyzes two reactions: the carboxylation of D-ribulose 1,5-bisphosphate, the primary event in carbon dioxide fixation, as well as the oxidative fragmentation of the pentose substrate in the photorespiration process. Both reactions occur simultaneously and in competition at the same active site. This is Ribulose bisphosphate carboxylase large chain (rbcL) from Spigelia marilandica (Woodland pinkroot).